A 449-amino-acid chain; its full sequence is Biotin carboxylase (449 aa).

A Biotin carboxylation domain is found at methionine 1–glycine 445. Residues lysine 116, lysine 159, glycine 165–glycine 166, glutamate 201–leucine 204, histidine 209, and histidine 236 contribute to the ATP site. An ATP-grasp domain is found at lysine 120–serine 317. Lysine 238 is a hydrogencarbonate binding site. The ATP site is built by glutamate 276 and glutamate 288. Mg(2+) is bound by residues glutamate 276, glutamate 288, and asparagine 290. The Mn(2+) site is built by glutamate 276, glutamate 288, and asparagine 290. Residues arginine 292, valine 295, and arginine 338 each contribute to the hydrogencarbonate site. Residue arginine 292 is part of the active site. Position 338 (arginine 338) interacts with biotin.

As to quaternary structure, acetyl-CoA carboxylase is a heterohexamer of biotin carboxyl carrier protein, biotin carboxylase and the two subunits of carboxyl transferase in a 2:2 complex. Mg(2+) is required as a cofactor. Mn(2+) serves as cofactor.

The catalysed reaction is N(6)-biotinyl-L-lysyl-[protein] + hydrogencarbonate + ATP = N(6)-carboxybiotinyl-L-lysyl-[protein] + ADP + phosphate + H(+). It participates in lipid metabolism; malonyl-CoA biosynthesis; malonyl-CoA from acetyl-CoA: step 1/1. Its function is as follows. This protein is a component of the acetyl coenzyme A carboxylase complex; first, biotin carboxylase catalyzes the carboxylation of the carrier protein and then the transcarboxylase transfers the carboxyl group to form malonyl-CoA. This is Biotin carboxylase (accC) from Pseudomonas aeruginosa (strain ATCC 15692 / DSM 22644 / CIP 104116 / JCM 14847 / LMG 12228 / 1C / PRS 101 / PAO1).